Consider the following 239-residue polypeptide: Leucyl/phenylalanyl-tRNA--protein transferase (239 aa).

It belongs to the L/F-transferase family.

It is found in the cytoplasm. It catalyses the reaction N-terminal L-lysyl-[protein] + L-leucyl-tRNA(Leu) = N-terminal L-leucyl-L-lysyl-[protein] + tRNA(Leu) + H(+). The enzyme catalyses N-terminal L-arginyl-[protein] + L-leucyl-tRNA(Leu) = N-terminal L-leucyl-L-arginyl-[protein] + tRNA(Leu) + H(+). The catalysed reaction is L-phenylalanyl-tRNA(Phe) + an N-terminal L-alpha-aminoacyl-[protein] = an N-terminal L-phenylalanyl-L-alpha-aminoacyl-[protein] + tRNA(Phe). Functions in the N-end rule pathway of protein degradation where it conjugates Leu, Phe and, less efficiently, Met from aminoacyl-tRNAs to the N-termini of proteins containing an N-terminal arginine or lysine. The polypeptide is Leucyl/phenylalanyl-tRNA--protein transferase (Aliivibrio fischeri (strain ATCC 700601 / ES114) (Vibrio fischeri)).